Here is a 481-residue protein sequence, read N- to C-terminus: MADKITSREADYSQWYIDLVRSAKLADYSDVRGCMVIRPNGYAVWEKMQAALDRMFKETGHVNAYFPLFIPESFIAKEAEHIEGFAPECAVVTHGGGEELAEKLYVRPTSETIIWSSYKKWIQSYRDLPLLINQWANVVRWEMRTRLFLRTTEFLWQEGHTAHATPEESQEEVMRMIRVYKTFAEEYMAMPVIMGRKTDSEKFAGADETYCIEAMMQDGKALQAGTSHNLGQNFAKAFDCQFQTKEGVLDYVWATSWGVSTRLIGALIMAHSDDRGLVLPPKLATRQVVIIPILRGDKAAVLAKAESMAAELKENGIPAFVDDSEQNSPGWKFAEYELQGIPVRIEVGPRDIDKGVCIAARRDTLEKTELQLDATLAVQVSGMLSAMQADMFQKALRFREENTREVTDYETFKSAVEEGFVIAHWDGTAETEEKIKEETRATIRVLPEESDYREHYHMDEPGVCIFSGKPSSQKVVFAKAY.

It belongs to the class-II aminoacyl-tRNA synthetase family. ProS type 3 subfamily. In terms of assembly, homodimer.

Its subcellular location is the cytoplasm. It catalyses the reaction tRNA(Pro) + L-proline + ATP = L-prolyl-tRNA(Pro) + AMP + diphosphate. Catalyzes the attachment of proline to tRNA(Pro) in a two-step reaction: proline is first activated by ATP to form Pro-AMP and then transferred to the acceptor end of tRNA(Pro). The chain is Proline--tRNA ligase from Chlorobium phaeovibrioides (strain DSM 265 / 1930) (Prosthecochloris vibrioformis (strain DSM 265)).